A 348-amino-acid polypeptide reads, in one-letter code: MSRFWSPFVKDLVPYVPGEQPKLARLVKLNTNENPYGPSPKALEAMQGELNDNLRLYPDPNSDRLKQAVAEYYGVTPAQVFVGNGSDEVLAHIFHGLFQHDRGPLLFPDVSYSFYPVYCGLYGIAFEQVELDEQFQIQVSDYSKPNAGIIFPNPNAPTGCLLPLEAVEQLLQANRDSVVVVDEAYIDFGGETAISLVDRYDNLLVTQTLSKSRSLAGLRVGLAVGHPDLIEALERIKNSFNSYPLDRMAIVGAAVAFEDREYFDETCRKVIDSREVLVEALTARGFEVLPSAANFIFARHPSQDAAGIAARLREQGVIVRHFKQGRIAQFLRITIGTPEMNQALLDAL.

N6-(pyridoxal phosphate)lysine is present on lysine 211.

This sequence belongs to the class-II pyridoxal-phosphate-dependent aminotransferase family. Histidinol-phosphate aminotransferase subfamily. Homodimer. It depends on pyridoxal 5'-phosphate as a cofactor.

The enzyme catalyses L-histidinol phosphate + 2-oxoglutarate = 3-(imidazol-4-yl)-2-oxopropyl phosphate + L-glutamate. It participates in amino-acid biosynthesis; L-histidine biosynthesis; L-histidine from 5-phospho-alpha-D-ribose 1-diphosphate: step 7/9. The chain is Histidinol-phosphate aminotransferase from Pseudomonas entomophila (strain L48).